We begin with the raw amino-acid sequence, 451 residues long: Trigger factor (451 aa).

The 86-residue stretch at Asp-165–Leu-250 folds into the PPIase FKBP-type domain.

The protein belongs to the FKBP-type PPIase family. Tig subfamily.

It is found in the cytoplasm. It catalyses the reaction [protein]-peptidylproline (omega=180) = [protein]-peptidylproline (omega=0). Its function is as follows. Involved in protein export. Acts as a chaperone by maintaining the newly synthesized protein in an open conformation. Functions as a peptidyl-prolyl cis-trans isomerase. The protein is Trigger factor of Helicobacter pylori (strain HPAG1).